A 402-amino-acid chain; its full sequence is NAD-dependent protein deacetylase sirtuin-7 (402 aa).

Disordered stretches follow at residues 1 to 25 and 59 to 78; these read MAAG…REEQ and VTEL…RQEE. The segment covering 9–25 has biased composition (basic and acidic residues); it reads RSERKAAERVRRLREEQ. The Deacetylase sirtuin-type domain maps to 83–330; the sequence is PEELRRKVRE…RLLMDELGLE (248 aa). NAD(+) is bound by residues 108-127 and 168-171; these read GAGI…NGVW and QNCD. His188 functions as the Proton acceptor in the catalytic mechanism. Cys196, Cys199, Cys226, and Cys229 together coordinate Zn(2+). NAD(+) contacts are provided by residues 269–271, 298–300, and Cys316; these read GSS and NLQ. The interval 355 to 385 is disordered; the sequence is SHSRKSLCRSREEPPPGDQSAPLASATPILG. Arg390 carries the post-translational modification Asymmetric dimethylarginine; alternate. Arg390 is subject to Omega-N-methylarginine; alternate.

This sequence belongs to the sirtuin family. Class IV subfamily. Interacts with UBTF and the RNA polymerase I complex. Interacts with components of the B-WICH complex, such as MYBBP1A, SMARCA5/SNF2H and BAZ1B/WSTF. Interacts with ELK4, leading to stabilization at target promoters for H3K18Ac deacetylation. Interacts with histone H2A and/or histone H2B. Interacts with DNMT1. Interacts with SIRT1. It depends on Zn(2+) as a cofactor. Post-translationally, phosphorylated during mitosis. In terms of processing, methylation at Arg-390 by PRMT6 inhibits the H3K18Ac histone deacetylase activity, promoting mitochondria biogenesis and maintaining mitochondria respiration. Ubiquitinated via 'Lys-63'-linked ubiquitin chains. Deubiquitinated by USP7, inhibiting the H3K18Ac histone deacetylase activity and regulating gluconeogenesis. Ubiquitinated by E3 ubiquitin-protein ligase complex containing FBXO7; leading to proteasomal degradation.

Its subcellular location is the nucleus. It localises to the nucleolus. The protein resides in the nucleoplasm. The protein localises to the chromosome. It is found in the cytoplasm. The enzyme catalyses N(6)-acetyl-L-lysyl-[protein] + NAD(+) + H2O = 2''-O-acetyl-ADP-D-ribose + nicotinamide + L-lysyl-[protein]. It catalyses the reaction N(6)-glutaryl-L-lysyl-[protein] + NAD(+) + H2O = 2''-O-glutaryl-ADP-D-ribose + nicotinamide + L-lysyl-[protein]. The catalysed reaction is N(6)-succinyl-L-lysyl-[protein] + NAD(+) + H2O = 2''-O-succinyl-ADP-D-ribose + nicotinamide + L-lysyl-[protein]. It carries out the reaction N(6)-propanoyl-L-lysyl-[protein] + NAD(+) + H2O = 3''-O-propanoyl-ADP-D-ribose + nicotinamide + L-lysyl-[protein]. The enzyme catalyses N(6)-decanoyl-L-lysyl-[protein] + NAD(+) + H2O = 2''-O-decanoyl-ADP-D-ribose + nicotinamide + L-lysyl-[protein]. NAD-dependent protein-lysine deacetylase and deacylase activities are activated by nucleic acids. Histone deacetylase activity is activated by DNA. Protein-lysine deacylase activity is activated by RNA. H3K18Ac histone deacetylase activity is inhibited by methylation at Arg-390. H3K18Ac histone deacetylase activity is inhibited by deubiquitination by USP7. Functionally, NAD-dependent protein-lysine deacylase that can act both as a deacetylase or deacylase (desuccinylase, depropionylase, deglutarylase and dedecanoylase), depending on the context. Specifically mediates deacetylation of histone H3 at 'Lys-18' (H3K18Ac). In contrast to other histone deacetylases, displays strong preference for a specific histone mark, H3K18Ac, directly linked to control of gene expression. H3K18Ac is mainly present around the transcription start site of genes and has been linked to activation of nuclear hormone receptors; SIRT7 thereby acts as a transcription repressor. Moreover, H3K18 hypoacetylation has been reported as a marker of malignancy in various cancers and seems to maintain the transformed phenotype of cancer cells. Also able to mediate deacetylation of histone H3 at 'Lys-36' (H3K36Ac) in the context of nucleosomes. Also mediates deacetylation of non-histone proteins, such as ATM, CDK9, DDX21, DDB1, FBL, FKBP5/FKBP51, GABPB1, RAN, RRP9/U3-55K and POLR1E/PAF53. Enriched in nucleolus where it stimulates transcription activity of the RNA polymerase I complex. Acts by mediating the deacetylation of the RNA polymerase I subunit POLR1E/PAF53, thereby promoting the association of RNA polymerase I with the rDNA promoter region and coding region. In response to metabolic stress, SIRT7 is released from nucleoli leading to hyperacetylation of POLR1E/PAF53 and decreased RNA polymerase I transcription. Required to restore the transcription of ribosomal RNA (rRNA) at the exit from mitosis. Promotes pre-ribosomal RNA (pre-rRNA) cleavage at the 5'-terminal processing site by mediating deacetylation of RRP9/U3-55K, a core subunit of the U3 snoRNP complex. Mediates 'Lys-37' deacetylation of Ran, thereby regulating the nuclear export of NF-kappa-B subunit RELA/p65. Acts as a regulator of DNA damage repair by mediating deacetylation of ATM during the late stages of DNA damage response, promoting ATM dephosphorylation and deactivation. Suppresses the activity of the DCX (DDB1-CUL4-X-box) E3 ubiquitin-protein ligase complexes by mediating deacetylation of DDB1, which prevents the interaction between DDB1 and CUL4 (CUL4A or CUL4B). Activates RNA polymerase II transcription by mediating deacetylation of CDK9, thereby promoting 'Ser-2' phosphorylation of the C-terminal domain (CTD) of RNA polymerase II. Deacetylates FBL, promoting histone-glutamine methyltransferase activity of FBL. Acts as a regulator of mitochondrial function by catalyzing deacetylation of GABPB1. Regulates Akt/AKT1 activity by mediating deacetylation of FKBP5/FKBP51. Required to prevent R-loop-associated DNA damage and transcription-associated genomic instability by mediating deacetylation and subsequent activation of DDX21, thereby overcoming R-loop-mediated stalling of RNA polymerases. In addition to protein deacetylase activity, also acts as a protein-lysine deacylase. Acts as a protein depropionylase by mediating depropionylation of Osterix (SP7), thereby regulating bone formation by osteoblasts. Acts as a histone deglutarylase by mediating deglutarylation of histone H4 on 'Lys-91' (H4K91glu); a mark that destabilizes nucleosomes by promoting dissociation of the H2A-H2B dimers from nucleosomes. Acts as a histone desuccinylase: in response to DNA damage, recruited to DNA double-strand breaks (DSBs) and catalyzes desuccinylation of histone H3 on 'Lys-122' (H3K122succ), thereby promoting chromatin condensation and DSB repair. Also promotes DSB repair by promoting H3K18Ac deacetylation, regulating non-homologous end joining (NHEJ). Along with its role in DNA repair, required for chromosome synapsis during prophase I of female meiosis by catalyzing H3K18Ac deacetylation. Involved in transcriptional repression of LINE-1 retrotransposon via H3K18Ac deacetylation, and promotes their association with the nuclear lamina. Required to stabilize ribosomal DNA (rDNA) heterochromatin and prevent cellular senescence induced by rDNA instability. Acts as a negative regulator of SIRT1 by preventing autodeacetylation of SIRT1, restricting SIRT1 deacetylase activity. The chain is NAD-dependent protein deacetylase sirtuin-7 from Rattus norvegicus (Rat).